Reading from the N-terminus, the 228-residue chain is Cytidylate kinase (228 aa).

17-25 (GPTASGKGT) is a binding site for ATP.

It belongs to the cytidylate kinase family. Type 1 subfamily.

Its subcellular location is the cytoplasm. It catalyses the reaction CMP + ATP = CDP + ADP. It carries out the reaction dCMP + ATP = dCDP + ADP. The polypeptide is Cytidylate kinase (Burkholderia thailandensis (strain ATCC 700388 / DSM 13276 / CCUG 48851 / CIP 106301 / E264)).